Reading from the N-terminus, the 102-residue chain is Small ribosomal subunit protein uS10 (102 aa).

The protein belongs to the universal ribosomal protein uS10 family. In terms of assembly, part of the 30S ribosomal subunit.

Functionally, involved in the binding of tRNA to the ribosomes. The polypeptide is Small ribosomal subunit protein uS10 (Mycoplasma mobile (strain ATCC 43663 / 163K / NCTC 11711) (Mesomycoplasma mobile)).